Reading from the N-terminus, the 244-residue chain is Cobalt transport protein CbiM (244 aa).

An N-terminal signal peptide occupies residues 1 to 27; it reads MVEGMLKTNFRLLFLLIFLLIPTPVLA. 6 helical membrane passes run 36–56, 65–85, 102–122, 134–154, 168–188, and 196–216; these read PVKW…VGFI, GPGA…LSAL, LAAI…VLIF, TLGA…YGVY, IFLA…VQLA, and LFLS…PLAI.

Belongs to the CbiM family. In terms of assembly, forms an energy-coupling factor (ECF) transporter complex composed of an ATP-binding protein (A component, CbiO), a transmembrane protein (T component, CbiQ) and 2 possible substrate-capture proteins (S components, CbiM and CbiN) of unknown stoichimetry.

Its subcellular location is the cell membrane. It functions in the pathway cofactor biosynthesis; adenosylcobalamin biosynthesis. In terms of biological role, part of the energy-coupling factor (ECF) transporter complex CbiMNOQ involved in cobalt import. The chain is Cobalt transport protein CbiM from Carboxydothermus hydrogenoformans (strain ATCC BAA-161 / DSM 6008 / Z-2901).